The chain runs to 341 residues: Phosphate acyltransferase (341 aa).

Belongs to the PlsX family. Homodimer. Probably interacts with PlsY.

It is found in the cytoplasm. The enzyme catalyses a fatty acyl-[ACP] + phosphate = an acyl phosphate + holo-[ACP]. Its pathway is lipid metabolism; phospholipid metabolism. In terms of biological role, catalyzes the reversible formation of acyl-phosphate (acyl-PO(4)) from acyl-[acyl-carrier-protein] (acyl-ACP). This enzyme utilizes acyl-ACP as fatty acyl donor, but not acyl-CoA. The sequence is that of Phosphate acyltransferase from Aliivibrio fischeri (strain ATCC 700601 / ES114) (Vibrio fischeri).